The chain runs to 498 residues: Probable malate:quinone oxidoreductase 2 (498 aa).

Belongs to the MQO family. FAD serves as cofactor.

It carries out the reaction (S)-malate + a quinone = a quinol + oxaloacetate. Its pathway is carbohydrate metabolism; tricarboxylic acid cycle; oxaloacetate from (S)-malate (quinone route): step 1/1. In Staphylococcus epidermidis (strain ATCC 12228 / FDA PCI 1200), this protein is Probable malate:quinone oxidoreductase 2.